The following is a 462-amino-acid chain: Ribosomal protein uS12 methylthiotransferase RimO (462 aa).

Positions 22–133 (ASVAFLHLGC…IIEVLQRVRQ (112 aa)) constitute an MTTase N-terminal domain. Positions 31, 67, 96, 171, 175, and 178 each coordinate [4Fe-4S] cluster. The 230-residue stretch at 157 to 386 (TTGRFVSYLK…VAIQQPISAA (230 aa)) folds into the Radical SAM core domain. The TRAM domain maps to 389–460 (QALIGQTVDV…LYDLTGEINH (72 aa)).

This sequence belongs to the methylthiotransferase family. RimO subfamily. Requires [4Fe-4S] cluster as cofactor.

It is found in the cytoplasm. The catalysed reaction is L-aspartate(89)-[ribosomal protein uS12]-hydrogen + (sulfur carrier)-SH + AH2 + 2 S-adenosyl-L-methionine = 3-methylsulfanyl-L-aspartate(89)-[ribosomal protein uS12]-hydrogen + (sulfur carrier)-H + 5'-deoxyadenosine + L-methionine + A + S-adenosyl-L-homocysteine + 2 H(+). Its function is as follows. Catalyzes the methylthiolation of an aspartic acid residue of ribosomal protein uS12. The sequence is that of Ribosomal protein uS12 methylthiotransferase RimO from Prochlorococcus marinus (strain MIT 9211).